Consider the following 136-residue polypeptide: Small ribosomal subunit protein uS8c (136 aa).

Belongs to the universal ribosomal protein uS8 family. As to quaternary structure, part of the 30S ribosomal subunit.

The protein localises to the plastid. The protein resides in the chloroplast. Its function is as follows. One of the primary rRNA binding proteins, it binds directly to 16S rRNA central domain where it helps coordinate assembly of the platform of the 30S subunit. This is Small ribosomal subunit protein uS8c (rps8) from Tetradesmus obliquus (Green alga).